The following is a 200-amino-acid chain: Inner membrane-spanning protein YciB (200 aa).

Helical transmembrane passes span 1–21 (MPPL…FFAN), 37–57 (IGAP…IALA), 66–86 (LPIM…LTLW), 103–123 (LFGG…GYVF), 136–156 (KLTL…EIVW), and 167–187 (FKVW…MPLI).

The protein belongs to the YciB family.

The protein localises to the cell inner membrane. Its function is as follows. Plays a role in cell envelope biogenesis, maintenance of cell envelope integrity and membrane homeostasis. The protein is Inner membrane-spanning protein YciB of Brucella suis biovar 1 (strain 1330).